Here is a 509-residue protein sequence, read N- to C-terminus: Glutamyl-tRNA(Gln) amidotransferase subunit B, mitochondrial (509 aa).

This sequence belongs to the GatB/GatE family. GatB subfamily. In terms of assembly, subunit of the heterotrimeric GatFAB amidotransferase (AdT) complex, composed of A, B and F subunits.

Its subcellular location is the mitochondrion. It carries out the reaction L-glutamyl-tRNA(Gln) + L-glutamine + ATP + H2O = L-glutaminyl-tRNA(Gln) + L-glutamate + ADP + phosphate + H(+). Allows the formation of correctly charged Gln-tRNA(Gln) through the transamidation of misacylated Glu-tRNA(Gln) in the mitochondria. The reaction takes place in the presence of glutamine and ATP through an activated gamma-phospho-Glu-tRNA(Gln). The polypeptide is Glutamyl-tRNA(Gln) amidotransferase subunit B, mitochondrial (Candida dubliniensis (strain CD36 / ATCC MYA-646 / CBS 7987 / NCPF 3949 / NRRL Y-17841) (Yeast)).